A 438-amino-acid polypeptide reads, in one-letter code: Na(+)/H(+) antiporter NhaA (438 aa).

Transmembrane regions (helical) follow at residues 23-43 (FGGI…NSFL), 62-82 (FFIG…LFFL), 104-124 (SFPV…YFFL), 133-153 (GFGI…MLLG), 162-182 (VFLI…IALF), 185-205 (TNLK…LAVL), 212-232 (SLIP…QSGI), 302-322 (FLAP…NAGV), 337-357 (LGVI…ITFI), 372-392 (WWHI…SMFI), and 410-430 (IAIL…LFVL).

The protein belongs to the NhaA Na(+)/H(+) (TC 2.A.33) antiporter family.

It is found in the cell inner membrane. The enzyme catalyses Na(+)(in) + 2 H(+)(out) = Na(+)(out) + 2 H(+)(in). Na(+)/H(+) antiporter that extrudes sodium in exchange for external protons. The sequence is that of Na(+)/H(+) antiporter NhaA from Helicobacter pylori (strain G27).